Here is a 704-residue protein sequence, read N- to C-terminus: Polyribonucleotide nucleotidyltransferase (704 aa).

Residues Asp-487 and Asp-493 each coordinate Mg(2+). In terms of domain architecture, KH spans 554 to 613 (PRLLTIKIHPDKIREVIGKGGSTIQAITKETGTQIDIQDDGTIIIASVNAIAAQAAKSRI). An S1 motif domain is found at 623–691 (GRIYEGKVAK…KQGRIRLSIK (69 aa)).

The protein belongs to the polyribonucleotide nucleotidyltransferase family. As to quaternary structure, component of the RNA degradosome, which is a multiprotein complex involved in RNA processing and mRNA degradation. Requires Mg(2+) as cofactor.

The protein resides in the cytoplasm. It carries out the reaction RNA(n+1) + phosphate = RNA(n) + a ribonucleoside 5'-diphosphate. Functionally, involved in mRNA degradation. Catalyzes the phosphorolysis of single-stranded polyribonucleotides processively in the 3'- to 5'-direction. The protein is Polyribonucleotide nucleotidyltransferase of Xanthomonas axonopodis pv. citri (strain 306).